The chain runs to 87 residues: Protein moa-2 (87 aa).

The disordered stretch occupies residues 23-87; sequence GTAMRHEPSR…VWTASREESS (65 aa). 2 stretches are compositionally biased toward basic and acidic residues: residues 26–39 and 50–63; these read MRHE…ESAP and RNEH…EREP.

The sequence is that of Protein moa-2 from Caenorhabditis elegans.